A 553-amino-acid chain; its full sequence is Chaperonin GroEL 1 (553 aa).

Residues 29 to 32 (TIGP), 86 to 90 (DGTTT), glycine 413, 476 to 478 (NAL), and aspartate 492 contribute to the ATP site. The interval 520-543 (DKPEPPAPAGGGGDPMGGMGGMDP) is disordered. A compositionally biased stretch (gly residues) spans 528 to 543 (AGGGGDPMGGMGGMDP).

Belongs to the chaperonin (HSP60) family. Forms a cylinder of 14 subunits composed of two heptameric rings stacked back-to-back. Interacts with the co-chaperonin GroES.

Its subcellular location is the cytoplasm. It carries out the reaction ATP + H2O + a folded polypeptide = ADP + phosphate + an unfolded polypeptide.. Its function is as follows. Together with its co-chaperonin GroES, plays an essential role in assisting protein folding. The GroEL-GroES system forms a nano-cage that allows encapsulation of the non-native substrate proteins and provides a physical environment optimized to promote and accelerate protein folding. This is Chaperonin GroEL 1 from Synechococcus sp. (strain CC9311).